Reading from the N-terminus, the 152-residue chain is Ninjurin-1 (152 aa).

At methionine 1 the chain carries N-acetylmethionine. Residues 1–10 (MDPGTEEYEL) are compositionally biased toward acidic residues. Positions 1–30 (MDPGTEEYELNGDLRPGSPGSPDASPPRWG) are disordered. At 1-78 (MDPGTEEYEL…EQGNEFAFFV (78 aa)) the chain is on the extracellular side. A compositionally biased stretch (low complexity) spans 16–27 (PGSPGSPDASPP). Phosphoserine occurs at positions 18, 21, and 25. The N-terminal adhesion motif stretch occupies residues 26 to 37 (PPRWGLRNRPIN). The segment at 40–69 (HYANKKSAAESMLDIALLMANASQLKAVVE) is required to induce plasma membrane rupture. Residues 44-55 (KKSAAESMLDIA) are helix alpha1. A helix alpha2 region spans residues 58–74 (MANASQLKAVVEQGNEF). A glycan (N-linked (GlcNAc...) asparagine) is linked at asparagine 60. Residues 79-103 (PLVVLISISLVLQIGVGVLLIFLVK) traverse the membrane as a helical segment. The Cytoplasmic segment spans residues 104–113 (YDLNNPAKHA). The helical transmembrane segment at 114–138 (KLDFLNNLATGLVFIIVVVNIFITA) threads the bilayer. The Extracellular segment spans residues 139-152 (FGVQKPVMDVAPRQ).

Belongs to the ninjurin family. As to quaternary structure, homodimer; in absence of death stimuli, forms an inactive homodimer. Homooligomer; in response to death stimuli, homooligomerizes into long, highly branched filaments and large, ring-shaped structures in the membrane. The topology shown in the entry corresponds to the activated form. In terms of processing, cleaved by MMP9 protease to generate the Secreted ninjurin-1 form. N-linked glycosylation is required for homooligomerization.

The protein localises to the cell membrane. The protein resides in the synaptic cell membrane. Its subcellular location is the secreted. Its activity is regulated as follows. In response to death stimuli, homooligomerizes and disrupts membrane integrity by introducing the hydrophilic faces of alpha1 and alpha2 helices into the hydrophobic membrane. Homooligomerization and ability to mediate plasma membrane rupture is inhibited by glycine; it is unclear whether glycine directly or indirectly inhibits homooligomerization. In normal conditions, NINJ1 is autoinhibited via formation of a homodimer: in the inactive homodimer, the alpha1 and alpha2 helices (residues 44-74) form a single transmembrane region without a kink, in which hydrophilic faces of alpha1 and alpha2 helices are sequestered. In terms of biological role, effector of various programmed cell death, such as pyroptosis and necroptosis, which mediates plasma membrane rupture (cytolysis). Oligomerizes in response to death stimuli and forms ring-like structures on the plasma membrane: acts by cutting and shedding membrane disks, like a cookie cutter, leading to membrane damage and loss that cannot be repaired by the cell. Plasma membrane rupture leads to release intracellular molecules named damage-associated molecular patterns (DAMPs) that propagate the inflammatory response. Mechanistically, mediates plasma membrane rupture by introducing hydrophilic faces of 2 alpha helices into the hydrophobic membrane. Induces plasma membrane rupture downstream of Gasdermin (GSDMA, GSDMB, GSDMC, GSDMD, or GSDME) or MLKL during pyroptosis or necroptosis, respectively. Acts as an effector of PANoptosis downstream of CASP1, CASP4, CASP8 and RIPK3. Also induces plasma membrane rupture in response to cell swelling caused by osmotic stress and ferroptosis downstream of lipid peroxidation. Acts as a regulator of Toll-like receptor 4 (TLR4) signaling triggered by lipopolysaccharide (LPS) during systemic inflammation; directly binds LPS. Involved in leukocyte migration during inflammation by promoting transendothelial migration of macrophages via homotypic binding. Promotes the migration of monocytes across the brain endothelium to central nervous system inflammatory lesions. Also acts as a homophilic transmembrane adhesion molecule involved in various processes such as axonal growth, cell chemotaxis and angiogenesis. Promotes cell adhesion by mediating homophilic interactions via its extracellular N-terminal adhesion motif (N-NAM). Involved in the progression of the inflammatory stress by promoting cell-to-cell interactions between immune cells and endothelial cells. Plays a role in nerve regeneration by promoting maturation of Schwann cells. Acts as a regulator of angiogenesis. Promotes the formation of new vessels by mediating the interaction between capillary pericyte cells and endothelial cells. Promotes osteoclasts development by enhancing the survival of prefusion osteoclasts. Also involved in striated muscle growth and differentiation. Secreted form generated by cleavage, which has chemotactic activity. Acts as an anti-inflammatory mediator by promoting monocyte recruitment, thereby ameliorating atherosclerosis. The chain is Ninjurin-1 from Rattus norvegicus (Rat).